Here is a 73-residue protein sequence, read N- to C-terminus: MKMMIAIVFVSILLLMFSLSSTAMGMETEQQNMEERADVDFTGIADSIIKKIKETNAKPPARFDPATFGENED.

The first 25 residues, 1–25 (MKMMIAIVFVSILLLMFSLSSTAMG), serve as a signal peptide directing secretion.

In terms of tissue distribution, expressed by the venom gland.

It localises to the secreted. Functionally, may potentiate the hypotensive effect of bradykinin. This Tityus serrulatus (Brazilian scorpion) protein is Hypotensin-like peptide.